We begin with the raw amino-acid sequence, 310 residues long: Alpha/beta hydrolase domain-containing protein 17A (310 aa).

Catalysis depends on charge relay system residues S190, D255, and H284. S307 bears the Phosphoserine mark.

The protein belongs to the AB hydrolase superfamily. ABHD17 family. Palmitoylated on cysteine residues located in a cysteine cluster at the N-terminus which promotes membrane localization. Palmitoylation is required for post-synaptic localization and for depalmitoylating activity towards DLG4/PSD95.

It is found in the cell membrane. The protein localises to the endosome membrane. It localises to the cell projection. The protein resides in the dendritic spine. Its subcellular location is the postsynaptic density membrane. The enzyme catalyses S-hexadecanoyl-L-cysteinyl-[protein] + H2O = L-cysteinyl-[protein] + hexadecanoate + H(+). Functionally, hydrolyzes fatty acids from S-acylated cysteine residues in proteins. Has depalmitoylating activity towards NRAS. Has depalmitoylating activity towards DLG4/PSD95. May have depalmitoylating activity towards MAP6. The protein is Alpha/beta hydrolase domain-containing protein 17A of Bos taurus (Bovine).